The primary structure comprises 23 residues: Elongation factor Tu (23 aa).

Belongs to the GTP-binding elongation factor family. EF-Tu/EF-1A subfamily. In terms of assembly, monomer. Post-translationally, the N-terminus is blocked. The C-terminus may be subjected to proteolysis.

The protein localises to the cytoplasm. Its function is as follows. This protein promotes the GTP-dependent binding of aminoacyl-tRNA to the A-site of ribosomes during protein biosynthesis. The sequence is that of Elongation factor Tu (tuf) from Delftia acidovorans (Pseudomonas acidovorans).